The primary structure comprises 188 residues: Type II secretion system protein H (188 aa).

Positions 1–10 (MKRSTRKQQG) are cleaved as a propeptide — leader sequence. F11 is modified (N-methylphenylalanine). Residues 13-35 (LLEMMLVVLLAGIAAGMVVMAFP) traverse the membrane as a helical segment.

The protein belongs to the GSP H family. In terms of assembly, type II secretion is composed of four main components: the outer membrane complex, the inner membrane complex, the cytoplasmic secretion ATPase and the periplasm-spanning pseudopilus. Interacts with core component OutG. Cleaved by prepilin peptidase. Post-translationally, methylated by prepilin peptidase at the amino group of the N-terminal phenylalanine once the leader sequence is cleaved by prepilin peptidase.

The protein resides in the cell inner membrane. Functionally, component of the type II secretion system required for the energy-dependent secretion of extracellular factors such as proteases and toxins from the periplasm. Part of the pseudopilus tip complex that is critical for the recognition and binding of secretion substrates. The protein is Type II secretion system protein H (outH) of Pectobacterium carotovorum subsp. carotovorum (Erwinia carotovora subsp. carotovora).